A 382-amino-acid polypeptide reads, in one-letter code: Ribosomal RNA large subunit methyltransferase G (382 aa).

This sequence belongs to the methyltransferase superfamily. RlmG family.

It is found in the cytoplasm. It catalyses the reaction guanosine(1835) in 23S rRNA + S-adenosyl-L-methionine = N(2)-methylguanosine(1835) in 23S rRNA + S-adenosyl-L-homocysteine + H(+). In terms of biological role, specifically methylates the guanine in position 1835 (m2G1835) of 23S rRNA. The protein is Ribosomal RNA large subunit methyltransferase G of Aliivibrio fischeri (strain ATCC 700601 / ES114) (Vibrio fischeri).